Reading from the N-terminus, the 810-residue chain is Venom phosphodiesterase 2 (810 aa).

Positions 1-23 (MIQQKVLFISLVAVTLGLGLGLG) are cleaved as a signal peptide. One can recognise an SMB domain in the interval 33–77 (QSWSCSKLRCGEKRIANVLCSCSDDCLEKKDCCTDYKSICKGETS). 9 disulfide bridges follow: Cys37–Cys42, Cys37–Cys54, Cys42–Cys72, Cys52–Cys54, Cys52–Cys65, Cys58–Cys64, Cys65–Cys72, Cys83–Cys129, and Cys91–Cys303. A divalent metal cation is bound by residues Asp106 and Thr144. Thr144 functions as the AMP-threonine intermediate in the catalytic mechanism. 3 N-linked (GlcNAc...) asparagine glycosylation sites follow: Asn175, Asn218, and Asn229. Residue Lys230 participates in AMP binding. A divalent metal cation is bound by residues Asp264, His268, Asp311, and His312. His268 is a binding site for AMP. 6 disulfide bridges follow: Cys319-Cys416, Cys367-Cys752, Cys500-Cys558, Cys513-Cys613, Cys515-Cys598, and Cys721-Cys731. An N-linked (GlcNAc...) asparagine glycan is attached at Asn364. His421 lines the a divalent metal cation pocket. N-linked (GlcNAc...) asparagine glycosylation is found at Asn471, Asn553, Asn633, and Asn704.

Belongs to the nucleotide pyrophosphatase/phosphodiesterase family. Monomer cleaved in two subunits; disulfide-linked. Is synthesized as a single-chain protein and is subsequently cleaved to form a two-subunit protein held together with disulfide bonds. It depends on a divalent metal cation as a cofactor. In terms of tissue distribution, expressed by venom gland.

It is found in the secreted. The enzyme catalyses ADP + H2O = AMP + phosphate + H(+). Functionally, hydrolyzes ADP with high activity. Shows weak or no activity on 5'-AMP, 5'-GMP, 3'-AMP, ATP, cAMP, and cGMP. Is devoid of monophosphatase and proteinase activities. Dose-dependently inhibits platelet aggregation induced by ADP (IC(50)=0.99 uM) and collagen (IC(50)=1.4 uM). The sequence is that of Venom phosphodiesterase 2 from Crotalus adamanteus (Eastern diamondback rattlesnake).